The primary structure comprises 409 residues: Peptidase T (409 aa).

Residue His-78 participates in Zn(2+) binding. Residue Asp-80 is part of the active site. Asp-140 is a binding site for Zn(2+). The active-site Proton acceptor is the Glu-173. Zn(2+)-binding residues include Glu-174, Asp-196, and His-379.

Belongs to the peptidase M20B family. Zn(2+) serves as cofactor.

It is found in the cytoplasm. The catalysed reaction is Release of the N-terminal residue from a tripeptide.. Cleaves the N-terminal amino acid of tripeptides. The protein is Peptidase T of Salmonella choleraesuis (strain SC-B67).